Here is a 255-residue protein sequence, read N- to C-terminus: Thiazole synthase (255 aa).

Lysine 96 (schiff-base intermediate with DXP) is an active-site residue. 1-deoxy-D-xylulose 5-phosphate-binding positions include glycine 157, alanine 183–glycine 184, and asparagine 205–threonine 206.

Belongs to the ThiG family. As to quaternary structure, homotetramer. Forms heterodimers with either ThiH or ThiS.

It localises to the cytoplasm. The catalysed reaction is [ThiS sulfur-carrier protein]-C-terminal-Gly-aminoethanethioate + 2-iminoacetate + 1-deoxy-D-xylulose 5-phosphate = [ThiS sulfur-carrier protein]-C-terminal Gly-Gly + 2-[(2R,5Z)-2-carboxy-4-methylthiazol-5(2H)-ylidene]ethyl phosphate + 2 H2O + H(+). It functions in the pathway cofactor biosynthesis; thiamine diphosphate biosynthesis. In terms of biological role, catalyzes the rearrangement of 1-deoxy-D-xylulose 5-phosphate (DXP) to produce the thiazole phosphate moiety of thiamine. Sulfur is provided by the thiocarboxylate moiety of the carrier protein ThiS. In vitro, sulfur can be provided by H(2)S. In Staphylococcus epidermidis (strain ATCC 35984 / DSM 28319 / BCRC 17069 / CCUG 31568 / BM 3577 / RP62A), this protein is Thiazole synthase.